The sequence spans 598 residues: MRGGGGCVLALGGQRGFQKERRRMASGNGLPSSSALVAKGPCALGPFPRYIWIHQDTPQDSLDKTCHEIWKRVQGLPEASQPWTSMEQLSVPVVGTLRGNELSFQEEALELSSGKDEISLLVEQEFLSLTKEHSILVEESSGELEVPGSSPEGTRELAPCILAPPLVAGSNERPRASIIVGDKLLKQKVAMPVISSRQDCDSATSTVTDILCAAEVKSSKGTEDRGRILGDSNLQVSKLLSQFPLKSTETSKVPDNKNVLDKTRVTKDFLQDNLFSGPGPKEPTGLSPFLLLPPRPPPARPDKLPELPAQKRQLPVFAKICSKPKADPAVERHHLMEWSPGTKEPKKGQGSLFLSQWPQSQKDACGEEGCCDAVGTASLTLPPKKPTCPAEKNLLYEFLGATKNPSGQPRLRNKVEVDGPELKFNAPVTVADKNNPKYTGNVFTPHFPTAMTSATLNQPLWLNLNYPPPPVFTNHSTFLQYQGLYPQQAARMPYQQALHPQLGCYSQQVMPYNPQQMGQQIFRSSYTPLLSYIPFVQPNYPYPQRTPPKMSANPRDPPLMAGDGPQYLFPQGYGFGSTSGGPLMHSPYFSSSGNGINF.

This is an uncharacterized protein from Homo sapiens (Human).